A 299-amino-acid polypeptide reads, in one-letter code: GTPase Era (299 aa).

The Era-type G domain maps to K4–E171. The tract at residues G12–S19 is G1. GTP is bound at residue G12–S19. The tract at residues Q38–N42 is G2. Residues D59 to G62 form a G3 region. Residues D59–I63 and N121–D124 each bind GTP. The G4 stretch occupies residues N121 to D124. Residues I150–A152 form a G5 region. The KH type-2 domain occupies T202–K280.

Belongs to the TRAFAC class TrmE-Era-EngA-EngB-Septin-like GTPase superfamily. Era GTPase family. In terms of assembly, monomer.

The protein localises to the cytoplasm. Its subcellular location is the cell membrane. An essential GTPase that binds both GDP and GTP, with rapid nucleotide exchange. Plays a role in 16S rRNA processing and 30S ribosomal subunit biogenesis and possibly also in cell cycle regulation and energy metabolism. The polypeptide is GTPase Era (Streptococcus uberis (strain ATCC BAA-854 / 0140J)).